The primary structure comprises 219 residues: MLHLVIADSELELAPKSIVDHPAIVNYAKRRNKKPEEVLLDSTYHHSALKKLEDGERRGRPDIVHVCLLNALESIANKEGKLRVYVHTRNDEVIYIKPETRIPRNYNRFVGLMESLFKNGVVPEGLELLRMEEKSLAELIDEIKPDGVFVMHENGESMKPQEFGKVLAGLQSPLVVVGGFPHGDFRSEIPGKKISLYKAPLMAWTVVNEIIINFEHWVL.

S-adenosyl-L-methionine contacts are provided by residues G178, G183, and 196 to 201 (LYKAPL).

The protein belongs to the class IV-like SAM-binding methyltransferase superfamily. RNA methyltransferase NEP1 family. As to quaternary structure, homodimer.

It catalyses the reaction a pseudouridine in rRNA + S-adenosyl-L-methionine = an N(1)-methylpseudouridine in rRNA + S-adenosyl-L-homocysteine + H(+). Functionally, methyltransferase involved in ribosomal biogenesis. Specifically catalyzes the N1-methylation of the pseudouridine corresponding to position 914 in M.jannaschii 16S rRNA. This chain is Ribosomal RNA small subunit methyltransferase Nep1, found in Thermococcus onnurineus (strain NA1).